Here is a 241-residue protein sequence, read N- to C-terminus: Ribonuclease P protein component 3 (241 aa).

Belongs to the eukaryotic/archaeal RNase P protein component 3 family. In terms of assembly, consists of a catalytic RNA component and at least 4-5 protein subunits.

The protein localises to the cytoplasm. It carries out the reaction Endonucleolytic cleavage of RNA, removing 5'-extranucleotides from tRNA precursor.. Its function is as follows. Part of ribonuclease P, a protein complex that generates mature tRNA molecules by cleaving their 5'-ends. This is Ribonuclease P protein component 3 from Methanococcoides burtonii (strain DSM 6242 / NBRC 107633 / OCM 468 / ACE-M).